Consider the following 131-residue polypeptide: Sec-independent protein translocase protein TatB (131 aa).

A helical transmembrane segment spans residues 2–22 (FANIGWGEMLVLVMVGLVVLG). The tract at residues 90–131 (DSLFTGDFDRPTPKKPDAAGSAGPDATEQIGAGPIPFDSDAT) is disordered. Basic and acidic residues predominate over residues 96–106 (DFDRPTPKKPD).

This sequence belongs to the TatB family. In terms of assembly, the Tat system comprises two distinct complexes: a TatABC complex, containing multiple copies of TatA, TatB and TatC subunits, and a separate TatA complex, containing only TatA subunits. Substrates initially bind to the TatABC complex, which probably triggers association of the separate TatA complex to form the active translocon.

The protein resides in the cell membrane. Its function is as follows. Part of the twin-arginine translocation (Tat) system that transports large folded proteins containing a characteristic twin-arginine motif in their signal peptide across membranes. Together with TatC, TatB is part of a receptor directly interacting with Tat signal peptides. TatB may form an oligomeric binding site that transiently accommodates folded Tat precursor proteins before their translocation. The protein is Sec-independent protein translocase protein TatB of Mycobacterium bovis (strain ATCC BAA-935 / AF2122/97).